Reading from the N-terminus, the 318-residue chain is GTP cyclohydrolase MptA (318 aa).

Belongs to the GTP cyclohydrolase IV family. Homodimer. The cofactor is Fe(2+).

It carries out the reaction GTP + H2O = 7,8-dihydroneopterin 2',3'-cyclic phosphate + formate + diphosphate + H(+). It participates in cofactor biosynthesis; 5,6,7,8-tetrahydromethanopterin biosynthesis. In terms of biological role, converts GTP to 7,8-dihydro-D-neopterin 2',3'-cyclic phosphate, the first intermediate in the biosynthesis of coenzyme methanopterin. This Methanothermobacter thermautotrophicus (strain ATCC 29096 / DSM 1053 / JCM 10044 / NBRC 100330 / Delta H) (Methanobacterium thermoautotrophicum) protein is GTP cyclohydrolase MptA.